Reading from the N-terminus, the 331-residue chain is 4-hydroxythreonine-4-phosphate dehydrogenase (331 aa).

Substrate is bound by residues His-136 and Thr-137. Residues His-166, His-211, and His-266 each contribute to the a divalent metal cation site. The substrate site is built by Lys-274, Asn-283, and Arg-292.

It belongs to the PdxA family. As to quaternary structure, homodimer. It depends on Zn(2+) as a cofactor. Mg(2+) is required as a cofactor. Co(2+) serves as cofactor.

Its subcellular location is the cytoplasm. The enzyme catalyses 4-(phosphooxy)-L-threonine + NAD(+) = 3-amino-2-oxopropyl phosphate + CO2 + NADH. Its pathway is cofactor biosynthesis; pyridoxine 5'-phosphate biosynthesis; pyridoxine 5'-phosphate from D-erythrose 4-phosphate: step 4/5. Catalyzes the NAD(P)-dependent oxidation of 4-(phosphooxy)-L-threonine (HTP) into 2-amino-3-oxo-4-(phosphooxy)butyric acid which spontaneously decarboxylates to form 3-amino-2-oxopropyl phosphate (AHAP). This chain is 4-hydroxythreonine-4-phosphate dehydrogenase, found in Thioalkalivibrio sulfidiphilus (strain HL-EbGR7).